The following is a 338-amino-acid chain: Phenylalanine--tRNA ligase alpha subunit (338 aa).

Glu-252 contacts Mg(2+).

This sequence belongs to the class-II aminoacyl-tRNA synthetase family. Phe-tRNA synthetase alpha subunit type 1 subfamily. Tetramer of two alpha and two beta subunits. Requires Mg(2+) as cofactor.

It is found in the cytoplasm. It carries out the reaction tRNA(Phe) + L-phenylalanine + ATP = L-phenylalanyl-tRNA(Phe) + AMP + diphosphate + H(+). This chain is Phenylalanine--tRNA ligase alpha subunit, found in Fusobacterium nucleatum subsp. nucleatum (strain ATCC 25586 / DSM 15643 / BCRC 10681 / CIP 101130 / JCM 8532 / KCTC 2640 / LMG 13131 / VPI 4355).